A 351-amino-acid chain; its full sequence is Epoxyqueuosine reductase (351 aa).

Asp131 serves as the catalytic Proton donor. The 29-residue stretch at 177 to 205 (EDQPVDYGCGSCTRCVDFCPTKALLGDGR) folds into the 4Fe-4S ferredoxin-type domain. [4Fe-4S] cluster contacts are provided by Cys185, Cys188, Cys191, Cys195, Cys211, Cys237, Cys240, and Cys244.

Belongs to the QueG family. Monomer. It depends on cob(II)alamin as a cofactor. [4Fe-4S] cluster serves as cofactor.

It is found in the cytoplasm. The catalysed reaction is epoxyqueuosine(34) in tRNA + AH2 = queuosine(34) in tRNA + A + H2O. The protein operates within tRNA modification; tRNA-queuosine biosynthesis. Its function is as follows. Catalyzes the conversion of epoxyqueuosine (oQ) to queuosine (Q), which is a hypermodified base found in the wobble positions of tRNA(Asp), tRNA(Asn), tRNA(His) and tRNA(Tyr). In Lactococcus garvieae (strain Lg2) (Enterococcus seriolicida), this protein is Epoxyqueuosine reductase.